The chain runs to 379 residues: Queuine tRNA-ribosyltransferase (379 aa).

Catalysis depends on Asp-93, which acts as the Proton acceptor. Substrate-binding positions include 93-97 (DSGGF), Asp-147, Gln-191, and Gly-218. The RNA binding stretch occupies residues 249–255 (GVGKPED). Residue Asp-268 is the Nucleophile of the active site. The interval 273 to 277 (TRNAR) is RNA binding; important for wobble base 34 recognition. 4 residues coordinate Zn(2+): Cys-306, Cys-308, Cys-311, and His-337.

The protein belongs to the queuine tRNA-ribosyltransferase family. In terms of assembly, homodimer. Within each dimer, one monomer is responsible for RNA recognition and catalysis, while the other monomer binds to the replacement base PreQ1. It depends on Zn(2+) as a cofactor.

The enzyme catalyses 7-aminomethyl-7-carbaguanine + guanosine(34) in tRNA = 7-aminomethyl-7-carbaguanosine(34) in tRNA + guanine. The protein operates within tRNA modification; tRNA-queuosine biosynthesis. Catalyzes the base-exchange of a guanine (G) residue with the queuine precursor 7-aminomethyl-7-deazaguanine (PreQ1) at position 34 (anticodon wobble position) in tRNAs with GU(N) anticodons (tRNA-Asp, -Asn, -His and -Tyr). Catalysis occurs through a double-displacement mechanism. The nucleophile active site attacks the C1' of nucleotide 34 to detach the guanine base from the RNA, forming a covalent enzyme-RNA intermediate. The proton acceptor active site deprotonates the incoming PreQ1, allowing a nucleophilic attack on the C1' of the ribose to form the product. After dissociation, two additional enzymatic reactions on the tRNA convert PreQ1 to queuine (Q), resulting in the hypermodified nucleoside queuosine (7-(((4,5-cis-dihydroxy-2-cyclopenten-1-yl)amino)methyl)-7-deazaguanosine). The protein is Queuine tRNA-ribosyltransferase of Mannheimia succiniciproducens (strain KCTC 0769BP / MBEL55E).